Consider the following 134-residue polypeptide: Mini-ribonuclease 3 (134 aa).

Residue Asp22 is part of the active site.

This sequence belongs to the MrnC RNase family. In terms of assembly, homodimer. It depends on Mg(2+) as a cofactor.

The protein resides in the cytoplasm. Involved in correct processing of both the 5' and 3' ends of 23S rRNA precursor. Processes 30S rRNA precursor transcript even in absence of ribonuclease 3 (Rnc); Rnc processes 30S rRNA into smaller rRNA precursors. This chain is Mini-ribonuclease 3, found in Staphylococcus aureus (strain NCTC 8325 / PS 47).